The following is a 570-amino-acid chain: MESVIRSSAKICPFMHSATGSMQSVKALKNANLPAIAQQCPFMGKAMEQRRGYASSASGASAAAAATATASTSASNSNSSVEASASADVVDHATKEASFDYQGLFDSDLAKKRMDKSYRFFNNINRLAKEFPMAHRKLEDDKVTVWCSNDYLALSKNQEVIEVMKKTLDKYGAGAGGTRNIAGHNKHALQLEAELATLHKKEGALVFSSCFVANDAVISLLGQKIKDLVIFSDELNHASMIVGIKHASTKKHIFKHNNLDQLEELLAMYPKSTPKLIAFESVYSMSGSVADIDKICDLAEKYGALTFLDEVHAVGLYGPHGAGVAEHCNFDAHRKAGIASPEFRTVMDRVDMITGTLGKSFGTVGGYVAGSLQLIDWVRSYAPGFIFTTTLPPAVMAGAAEAIRYQRSHLDLRQDQQRHTTYVKDGLADLGIPVMPNPSHIVPVLVGNPHLAKQASDILMDKHRIYVQAINFPTVARGTERLRITPTPGHTNDLSDILMDALEDVWSTLQLPRVRDWEAQGGLLGVGDPNHVPQPNLWTKDQLTLTNNDLHPNVKQPIIEQLEVSSGIRY.

Residues 1 to 53 (MESVIRSSAKICPFMHSATGSMQSVKALKNANLPAIAQQCPFMGKAMEQRRGY) constitute a mitochondrion transit peptide. Substrate contacts are provided by arginine 119, serine 232, and lysine 251. 3 residues coordinate pyridoxal 5'-phosphate: serine 284, histidine 312, and threonine 356. Lysine 359 is an active-site residue. The residue at position 359 (lysine 359) is an N6-(pyridoxal phosphate)lysine. 2 residues coordinate pyridoxal 5'-phosphate: threonine 388 and threonine 389. Threonine 474 lines the substrate pocket.

Belongs to the class-II pyridoxal-phosphate-dependent aminotransferase family. Homodimer. It depends on pyridoxal 5'-phosphate as a cofactor.

The protein resides in the mitochondrion matrix. It catalyses the reaction succinyl-CoA + glycine + H(+) = 5-aminolevulinate + CO2 + CoA. Its pathway is porphyrin-containing compound metabolism; protoporphyrin-IX biosynthesis; 5-aminolevulinate from glycine: step 1/1. Its function is as follows. Catalyzes the synthesis of 5-aminolevulinate (ALA) from succinyl-CoA and glycine, the first and rate-limiting step in heme biosynthesis. The chain is 5-aminolevulinate synthase, mitochondrial (HEM1) from Kluyveromyces lactis (strain ATCC 8585 / CBS 2359 / DSM 70799 / NBRC 1267 / NRRL Y-1140 / WM37) (Yeast).